The primary structure comprises 532 residues: Spore coat protein SP85 (532 aa).

The N-terminal stretch at 1–19 (MRLLSVLLIGFLCLAGTYA) is a signal peptide. An N-linked (GlcNAc...) asparagine glycan is attached at asparagine 47. Residues 197–265 (TQSPTQPPTQ…PTQPPTQPPV (69 aa)) form a disordered region. Residues 201-263 (TQPPTQPPTY…YPPTQPPTQP (63 aa)) are compositionally biased toward pro residues. One can recognise a Follistatin-like 1 domain in the interval 267–289 (DCSTLECPEGFHCEIVNNRRTCV). The disordered stretch occupies residues 297 to 320 (THPPTQSPTYPPTQPPTQPPTYPP). Follistatin-like domains lie at 335–359 (SCDNVRCPRGYHCECNHWENVARCV), 400–423 (TCDQVRCPRKHHCECNRKGQVFCV), and 430–452 (TCKQVGCPENHECVSRRGELHCV).

As to quaternary structure, binds to cotE. Post-translationally, O-glycosylated.

It is found in the spore wall. Required for incorporation of cotE into the spore coat and for the formation of the outer layer. Has a cross-bridging function between cellulose and other coat proteins. The polypeptide is Spore coat protein SP85 (pspB) (Dictyostelium discoideum (Social amoeba)).